We begin with the raw amino-acid sequence, 374 residues long: Pectate lyase 2 (374 aa).

Positions 1-22 (MKYLLPTAAAGLLLLAAQPAMA) are cleaved as a signal peptide. An intrachain disulfide couples C93 to C176. Residues D150, D152, E187, and D191 each coordinate Ca(2+). The active site involves R239. An intrachain disulfide couples C350 to C373.

The protein belongs to the polysaccharide lyase 1 family. PLADES subfamily. Requires Ca(2+) as cofactor.

The protein localises to the secreted. It carries out the reaction Eliminative cleavage of (1-&gt;4)-alpha-D-galacturonan to give oligosaccharides with 4-deoxy-alpha-D-galact-4-enuronosyl groups at their non-reducing ends.. It participates in glycan metabolism; pectin degradation; 2-dehydro-3-deoxy-D-gluconate from pectin: step 2/5. Its function is as follows. Involved in maceration and soft-rotting of plant tissue. The sequence is that of Pectate lyase 2 (pel2) from Pectobacterium carotovorum (Erwinia carotovora).